The following is a 209-amino-acid chain: Imidazole glycerol phosphate synthase subunit HisH (209 aa).

Residues 1–205 (MIAIIDYGMG…KGVVEAWKSS (205 aa)) enclose the Glutamine amidotransferase type-1 domain. C79 serves as the catalytic Nucleophile. Residues H180 and E182 contribute to the active site.

As to quaternary structure, heterodimer of HisH and HisF.

It localises to the cytoplasm. It carries out the reaction 5-[(5-phospho-1-deoxy-D-ribulos-1-ylimino)methylamino]-1-(5-phospho-beta-D-ribosyl)imidazole-4-carboxamide + L-glutamine = D-erythro-1-(imidazol-4-yl)glycerol 3-phosphate + 5-amino-1-(5-phospho-beta-D-ribosyl)imidazole-4-carboxamide + L-glutamate + H(+). The catalysed reaction is L-glutamine + H2O = L-glutamate + NH4(+). It participates in amino-acid biosynthesis; L-histidine biosynthesis; L-histidine from 5-phospho-alpha-D-ribose 1-diphosphate: step 5/9. Its function is as follows. IGPS catalyzes the conversion of PRFAR and glutamine to IGP, AICAR and glutamate. The HisH subunit catalyzes the hydrolysis of glutamine to glutamate and ammonia as part of the synthesis of IGP and AICAR. The resulting ammonia molecule is channeled to the active site of HisF. This Bacillus mycoides (strain KBAB4) (Bacillus weihenstephanensis) protein is Imidazole glycerol phosphate synthase subunit HisH.